The sequence spans 1363 residues: DNA-directed RNA polymerase subunit beta (1363 aa).

This sequence belongs to the RNA polymerase beta chain family. The RNAP catalytic core consists of 2 alpha, 1 beta, 1 beta' and 1 omega subunit. When a sigma factor is associated with the core the holoenzyme is formed, which can initiate transcription.

It catalyses the reaction RNA(n) + a ribonucleoside 5'-triphosphate = RNA(n+1) + diphosphate. DNA-dependent RNA polymerase catalyzes the transcription of DNA into RNA using the four ribonucleoside triphosphates as substrates. This chain is DNA-directed RNA polymerase subunit beta, found in Pelagibacter ubique (strain HTCC1062).